The following is a 219-amino-acid chain: MSRLAVDSGQVLAEPKSNAEIVFKGRNVEIPDHFRIYVSQKLARLERFDRTIYLFDVELDHERNRRQRKSCQRVEITARGRGPVVRGEACADSFYAALESAVVKLESRLRRGKDRRKVHYGDKTPVSLAEATAVVPAPENGFNTRPAEAHDHDGAVVEREPGRIVRTKEHPAKPMSVDDALYQMELVGHDFFLFYDKDTERPSVVYRRHAYDYGLIRLA.

The protein belongs to the HPF/YfiA ribosome-associated protein family. Long HPF subfamily. In terms of assembly, interacts with 100S ribosomes.

It localises to the cytoplasm. In terms of biological role, required for dimerization of active 70S ribosomes into 100S ribosomes in stationary phase; 100S ribosomes are translationally inactive and sometimes present during exponential growth. The polypeptide is Ribosome hibernation promotion factor (Mycobacterium tuberculosis (strain ATCC 25618 / H37Rv)).